The following is a 241-amino-acid chain: Chloride intracellular channel protein 1 (241 aa).

A2 carries the post-translational modification N-acetylalanine. The segment at 2–90 is required for insertion into the membrane; sequence AEEQPQVELF…EEFLEAVLCP (89 aa). An N6-acetyllysine modification is found at K13. A G-site motif is present at residues 24 to 27; that stretch reads CPFS. An intrachain disulfide couples C24 to C59. Residues 26-46 form a helical membrane-spanning segment; the sequence is FSQRLFMVLWLKGVTFNVTTV. The GST C-terminal domain occupies 93–233; sequence YPKLAALNPE…PDDEEIELAY (141 aa). The residue at position 119 (K119) is an N6-acetyllysine. S121 carries the post-translational modification Phosphoserine. N6-acetyllysine is present on K131. S156 carries the phosphoserine modification. Y233 is subject to Phosphotyrosine.

Belongs to the chloride channel CLIC family. In terms of assembly, monomer. Homodimer (in vitro). Interacts with TRAPPC2. Dimerization requires a conformation change that leads to the exposure of a large hydrophobic surface. In vivo, this may lead to membrane insertion.

The protein localises to the nucleus. The protein resides in the nucleus membrane. Its subcellular location is the cytoplasm. It is found in the cell membrane. It localises to the endoplasmic reticulum. The catalysed reaction is L-dehydroascorbate + 2 glutathione = glutathione disulfide + L-ascorbate. It carries out the reaction chloride(in) = chloride(out). It catalyses the reaction iodide(out) = iodide(in). The enzyme catalyses thiocyanate(in) = thiocyanate(out). The catalysed reaction is nitrate(in) = nitrate(out). It carries out the reaction bromide(in) = bromide(out). It catalyses the reaction fluoride(in) = fluoride(out). Functionally, in the soluble state, catalyzes glutaredoxin-like thiol disulfide exchange reactions with reduced glutathione as electron donor. Reduces selenite and dehydroascorbate and may act as an antioxidant during oxidative stress response. Can insert into membranes and form voltage-dependent multi-ion conductive channels. Membrane insertion seems to be redox-regulated and may occur only under oxidizing conditions. Involved in regulation of the cell cycle. The sequence is that of Chloride intracellular channel protein 1 (CLIC1) from Bos taurus (Bovine).